Reading from the N-terminus, the 340-residue chain is Phospho-N-acetylmuramoyl-pentapeptide-transferase (340 aa).

A run of 9 helical transmembrane segments spans residues 22–42, 69–89, 95–115, 129–149, 156–176, 186–206, 209–229, 235–257, and 316–336; these read VVVPFGLSALGSALLGSLLIP, TMGGISFLPVGLLVAGIWSGW, AVALLTLAYSFVGWLDDWLVI, LLLQVGVALGFCVYLAWQGIP, GIGTLSLGWLFWPLALFVLVG, GMDGLAAGVVAILLIGLGLLH, PELSVLAFTLSGACLGFLVHN, LFMGDTGSLGLGGALAGLALLGD, and VVGSFYGVTALLVGLGWAWWH.

This sequence belongs to the glycosyltransferase 4 family. MraY subfamily. It depends on Mg(2+) as a cofactor.

The protein localises to the cell inner membrane. The catalysed reaction is UDP-N-acetyl-alpha-D-muramoyl-L-alanyl-gamma-D-glutamyl-meso-2,6-diaminopimeloyl-D-alanyl-D-alanine + di-trans,octa-cis-undecaprenyl phosphate = di-trans,octa-cis-undecaprenyl diphospho-N-acetyl-alpha-D-muramoyl-L-alanyl-D-glutamyl-meso-2,6-diaminopimeloyl-D-alanyl-D-alanine + UMP. Its pathway is cell wall biogenesis; peptidoglycan biosynthesis. In terms of biological role, catalyzes the initial step of the lipid cycle reactions in the biosynthesis of the cell wall peptidoglycan: transfers peptidoglycan precursor phospho-MurNAc-pentapeptide from UDP-MurNAc-pentapeptide onto the lipid carrier undecaprenyl phosphate, yielding undecaprenyl-pyrophosphoryl-MurNAc-pentapeptide, known as lipid I. This Synechococcus sp. (strain JA-2-3B'a(2-13)) (Cyanobacteria bacterium Yellowstone B-Prime) protein is Phospho-N-acetylmuramoyl-pentapeptide-transferase.